Consider the following 347-residue polypeptide: Circulating cathodic antigen (347 aa).

The stretch at 76–109 forms a coiled coil; sequence ICLAAENKQLEQLKIENKTLRNSLDEHQTALDMI. Positions 149-177 are disordered; it reads PGPKSVNTPSTNSIDSQSVSQKSNSGKVD. Polar residues predominate over residues 153-174; sequence SVNTPSTNSIDSQSVSQKSNSG. A coiled-coil region spans residues 206-233; sequence DAYATELEEELHRLRSENAGLREILMIS. Residues 303 to 332 are disordered; it reads LYNIPNPSDDSSNSGTISGNHSDEDSDEDD. Low complexity predominate over residues 307–316; the sequence is PNPSDDSSNS.

It belongs to the SIKE family. O-glycosylated.

Involved in protection of the schistosome gut. The chain is Circulating cathodic antigen from Schistosoma mansoni (Blood fluke).